The sequence spans 334 residues: MKEIFLQISNRQDLSQDQVQAVFDRILKNEVSESQIASFLMGLKIKGETSDEITGIVRALKSHATVLPETFTDAMCNCGTGGDQSYSFNISTTACFVLAAGGIRMAKAGNRSISSKSGSADVLEVLGINVAASPEILSKALDEVGLAFIFAQTMHPAMRFIGPARQALGIPTIMNLVGPLANPLDLETQLMGLYRVELQEIVANTIQQLGRKRAVIITGPDNMDEAALYGTNTYTLLEDGHISQHTFTYEDLGMEKVELSDITGGDAKENAEILLSVLRNEASPYLETTVLNVGLGFFANGKAGTIKEGVELARQLIADGSALEKLRKLQEVQV.

5-phospho-alpha-D-ribose 1-diphosphate is bound by residues G79, 82 to 83 (GD), S87, 89 to 92 (NIST), 107 to 115 (KAGNRSISS), and S119. G79 is an anthranilate binding site. S91 contributes to the Mg(2+) binding site. N110 is an anthranilate binding site. An anthranilate-binding site is contributed by R165. Mg(2+)-binding residues include D224 and E225.

This sequence belongs to the anthranilate phosphoribosyltransferase family. In terms of assembly, homodimer. Requires Mg(2+) as cofactor.

It carries out the reaction N-(5-phospho-beta-D-ribosyl)anthranilate + diphosphate = 5-phospho-alpha-D-ribose 1-diphosphate + anthranilate. The protein operates within amino-acid biosynthesis; L-tryptophan biosynthesis; L-tryptophan from chorismate: step 2/5. Its function is as follows. Catalyzes the transfer of the phosphoribosyl group of 5-phosphorylribose-1-pyrophosphate (PRPP) to anthranilate to yield N-(5'-phosphoribosyl)-anthranilate (PRA). This chain is Anthranilate phosphoribosyltransferase, found in Streptococcus thermophilus (strain CNRZ 1066).